The sequence spans 397 residues: Phosphoglycerate kinase (397 aa).

Substrate contacts are provided by residues 21–23, Arg-36, 59–62, Arg-118, and Arg-151; these read DFN and HCGR. ATP is bound by residues Lys-201, Glu-323, and 353 to 356; that span reads GGDT.

The protein belongs to the phosphoglycerate kinase family. In terms of assembly, monomer.

It localises to the cytoplasm. It catalyses the reaction (2R)-3-phosphoglycerate + ATP = (2R)-3-phospho-glyceroyl phosphate + ADP. It participates in carbohydrate degradation; glycolysis; pyruvate from D-glyceraldehyde 3-phosphate: step 2/5. In Bartonella tribocorum (strain CIP 105476 / IBS 506), this protein is Phosphoglycerate kinase.